A 414-amino-acid polypeptide reads, in one-letter code: Serine hydroxymethyltransferase (414 aa).

(6S)-5,6,7,8-tetrahydrofolate contacts are provided by residues Leu-117 and 121-123 (GHL). At Lys-226 the chain carries N6-(pyridoxal phosphate)lysine.

The protein belongs to the SHMT family. As to quaternary structure, homodimer. Pyridoxal 5'-phosphate is required as a cofactor.

It is found in the cytoplasm. The catalysed reaction is (6R)-5,10-methylene-5,6,7,8-tetrahydrofolate + glycine + H2O = (6S)-5,6,7,8-tetrahydrofolate + L-serine. The protein operates within one-carbon metabolism; tetrahydrofolate interconversion. Its pathway is amino-acid biosynthesis; glycine biosynthesis; glycine from L-serine: step 1/1. In terms of biological role, catalyzes the reversible interconversion of serine and glycine with tetrahydrofolate (THF) serving as the one-carbon carrier. This reaction serves as the major source of one-carbon groups required for the biosynthesis of purines, thymidylate, methionine, and other important biomolecules. Also exhibits THF-independent aldolase activity toward beta-hydroxyamino acids, producing glycine and aldehydes, via a retro-aldol mechanism. This Dictyoglomus turgidum (strain DSM 6724 / Z-1310) protein is Serine hydroxymethyltransferase.